The following is a 244-amino-acid chain: Tyrosine recombinase XerD-like (244 aa).

Residues 1–73 (MRDRISAFLE…ACNQFLYFLY (73 aa)) form the Core-binding (CB) domain. In terms of domain architecture, Tyr recombinase spans 90–244 (AEKKTEKPEI…KTVLTLEKYR (155 aa)). Catalysis depends on residues K150 and R211. The active-site O-(3'-phospho-DNA)-tyrosine intermediate is Y243.

Belongs to the 'phage' integrase family. XerD-like subfamily.

It localises to the cytoplasm. Its function is as follows. Putative tyrosine recombinase. Not involved in the cutting and rejoining of the recombining DNA molecules on dif(SL) site. This is Tyrosine recombinase XerD-like from Streptococcus pneumoniae (strain Hungary19A-6).